The sequence spans 413 residues: Alpha-1-antiproteinase (413 aa).

The signal sequence occupies residues 1–24 (MTPSISWRLLLLAGLCCLVPSYLA). Position 33 is a phosphoserine (S33). N64, N101, and N265 each carry an N-linked (GlcNAc...) asparagine glycan. Residues 368–387 (ATTIVEAVFMSLPPILHFNH) form an RCL region. S378 is subject to Phosphoserine.

It belongs to the serpin family. In terms of assembly, interacts with CELA2A. Interacts with ERGIC3 and LMAN1/ERGIC53. Interacts with PRSS1/Trypsin.

It is found in the secreted. In terms of biological role, inhibitor of serine proteases. The primary target is elastase, but also has a moderate affinity for plasmin and thrombin. The sequence is that of Alpha-1-antiproteinase (Serpina1) from Mus saxicola (Brown spiny mouse).